Here is a 550-residue protein sequence, read N- to C-terminus: Metal transporter Nramp4 (550 aa).

The segment covering methionine 1–glutamine 13 has biased composition (basic and acidic residues). The tract at residues methionine 1–glycine 37 is disordered. A compositionally biased stretch (low complexity) spans glutamine 14–alanine 29. Helical transmembrane passes span phenylalanine 72–leucine 92, serine 105–alanine 125, leucine 151–alanine 171, leucine 177–leucine 197, methionine 207–glycine 227, valine 255–leucine 275, phenylalanine 292–valine 312, valine 354–glycine 374, isoleucine 388–glycine 408, isoleucine 416–isoleucine 436, isoleucine 457–phenylalanine 477, and alanine 492–leucine 512.

Belongs to the NRAMP (TC 2.A.55) family.

Its subcellular location is the membrane. Functionally, probable metal transporter. This chain is Metal transporter Nramp4 (NRAMP4), found in Oryza sativa subsp. japonica (Rice).